The chain runs to 130 residues: MSDTWLNKVNWSADGLVPVVTQDAISNKVLMVAWMNPEALRLTAQTGEAHYWSRSRKKLWHKGEESGHVQKVKEIRLDCDEDVLLLVVEQVGGVACHTGRHHCFFKKLEQDQWLVTEPVIKNPEEIYGQR.

Residue Asp78 coordinates Mg(2+). Cys79 contacts Zn(2+). Mg(2+)-binding residues include Asp80 and Asp82. Residues Cys96 and Cys103 each contribute to the Zn(2+) site.

It belongs to the PRA-CH family. Homodimer. Mg(2+) is required as a cofactor. The cofactor is Zn(2+).

It localises to the cytoplasm. The catalysed reaction is 1-(5-phospho-beta-D-ribosyl)-5'-AMP + H2O = 1-(5-phospho-beta-D-ribosyl)-5-[(5-phospho-beta-D-ribosylamino)methylideneamino]imidazole-4-carboxamide. Its pathway is amino-acid biosynthesis; L-histidine biosynthesis; L-histidine from 5-phospho-alpha-D-ribose 1-diphosphate: step 3/9. Its function is as follows. Catalyzes the hydrolysis of the adenine ring of phosphoribosyl-AMP. The chain is Phosphoribosyl-AMP cyclohydrolase from Nitrosospira multiformis (strain ATCC 25196 / NCIMB 11849 / C 71).